Here is a 206-residue protein sequence, read N- to C-terminus: Large ribosomal subunit protein uL4 (206 aa).

The disordered stretch occupies residues 44–87 (KRQGTHATKTRGMKRGGGAKPWRQKGTGRARAGSTRSPLWRGGG).

It belongs to the universal ribosomal protein uL4 family. In terms of assembly, part of the 50S ribosomal subunit.

Its function is as follows. One of the primary rRNA binding proteins, this protein initially binds near the 5'-end of the 23S rRNA. It is important during the early stages of 50S assembly. It makes multiple contacts with different domains of the 23S rRNA in the assembled 50S subunit and ribosome. In terms of biological role, forms part of the polypeptide exit tunnel. The polypeptide is Large ribosomal subunit protein uL4 (Maridesulfovibrio salexigens (strain ATCC 14822 / DSM 2638 / NCIMB 8403 / VKM B-1763) (Desulfovibrio salexigens)).